A 291-amino-acid chain; its full sequence is NAD kinase (291 aa).

Aspartate 73 (proton acceptor) is an active-site residue. NAD(+) contacts are provided by residues 73-74 (DG), 147-148 (ND), arginine 175, aspartate 177, and glutamine 246.

This sequence belongs to the NAD kinase family. A divalent metal cation serves as cofactor.

The protein resides in the cytoplasm. It catalyses the reaction NAD(+) + ATP = ADP + NADP(+) + H(+). In terms of biological role, involved in the regulation of the intracellular balance of NAD and NADP, and is a key enzyme in the biosynthesis of NADP. Catalyzes specifically the phosphorylation on 2'-hydroxyl of the adenosine moiety of NAD to yield NADP. This Chromobacterium violaceum (strain ATCC 12472 / DSM 30191 / JCM 1249 / CCUG 213 / NBRC 12614 / NCIMB 9131 / NCTC 9757 / MK) protein is NAD kinase.